The sequence spans 137 residues: MAHRSHTGTGPSQRQLRVGELIRRTLADVLNRGEIHDPELNRLSITVGEVRCSPDLKVATVHVMPLGGKNVEEAIALLSKHRGELRHHITRQMTLKYAPDLRFRPDETFDRLDETRRLFSDETVMRDIRGGGEADED.

This sequence belongs to the RbfA family. Monomer. Binds 30S ribosomal subunits, but not 50S ribosomal subunits or 70S ribosomes.

The protein localises to the cytoplasm. Its function is as follows. One of several proteins that assist in the late maturation steps of the functional core of the 30S ribosomal subunit. Associates with free 30S ribosomal subunits (but not with 30S subunits that are part of 70S ribosomes or polysomes). Required for efficient processing of 16S rRNA. May interact with the 5'-terminal helix region of 16S rRNA. The sequence is that of Ribosome-binding factor A from Cereibacter sphaeroides (strain ATCC 17029 / ATH 2.4.9) (Rhodobacter sphaeroides).